A 299-amino-acid polypeptide reads, in one-letter code: Ribosomal RNA small subunit methyltransferase H (299 aa).

S-adenosyl-L-methionine-binding positions include 36-38, aspartate 55, tyrosine 82, aspartate 103, and glutamine 110; that span reads GGH. 2 stretches are compositionally biased toward basic and acidic residues: residues 269–282 and 289–299; these read PVRP…ENPR and RAAERIEEGGD. A disordered region spans residues 269-299; that stretch reads PVRPSEEEIRENPRARSGRLRAAERIEEGGD.

It belongs to the methyltransferase superfamily. RsmH family.

The protein localises to the cytoplasm. It catalyses the reaction cytidine(1402) in 16S rRNA + S-adenosyl-L-methionine = N(4)-methylcytidine(1402) in 16S rRNA + S-adenosyl-L-homocysteine + H(+). Functionally, specifically methylates the N4 position of cytidine in position 1402 (C1402) of 16S rRNA. This chain is Ribosomal RNA small subunit methyltransferase H, found in Thermotoga maritima (strain ATCC 43589 / DSM 3109 / JCM 10099 / NBRC 100826 / MSB8).